The sequence spans 397 residues: L-asparaginase-like protein GM15681 (397 aa).

A signal peptide spans 1 to 22 (MLAQSCCLRLLILLLLFTSICS). 3 cysteine pairs are disulfide-bonded: cysteine 90-cysteine 95, cysteine 189-cysteine 205, and cysteine 344-cysteine 371.

This sequence belongs to the Ntn-hydrolase family.

The chain is L-asparaginase-like protein GM15681 from Drosophila sechellia (Fruit fly).